The primary structure comprises 102 residues: Large ribosomal subunit protein bL28 (102 aa).

A disordered region spans residues 1-20; that stretch reads MSRRCELTAKGPQVGHKVSH.

Belongs to the bacterial ribosomal protein bL28 family.

This is Large ribosomal subunit protein bL28 from Bradyrhizobium sp. (strain BTAi1 / ATCC BAA-1182).